We begin with the raw amino-acid sequence, 98 residues long: uncharacterized protein (98 aa).

The region spanning Lys-30–Glu-98 is the MOSC domain.

This is an uncharacterized protein from Haemophilus influenzae (strain ATCC 51907 / DSM 11121 / KW20 / Rd).